A 222-amino-acid polypeptide reads, in one-letter code: Pleckstrin homology domain-containing family B member 2 (222 aa).

In terms of domain architecture, PH spans 2–109 (AFVKSGWLLR…WKFTLQDSRT (108 aa)). Position 20 (lysine 20) interacts with a 1,2-diacyl-sn-glycero-3-phospho-L-serine.

It is found in the recycling endosome membrane. Involved in retrograde transport of recycling endosomes. The sequence is that of Pleckstrin homology domain-containing family B member 2 (PLEKHB2) from Homo sapiens (Human).